The primary structure comprises 553 residues: Copine-9 (553 aa).

C2 domains lie at Met-1–Leu-125 and Lys-132–Tyr-255. Ca(2+) is bound by residues Asp-163, Asp-169, Asp-225, Asp-227, and Asp-233. The VWFA domain maps to Asn-299 to Val-500. Residues Thr-531–Pro-553 are disordered. Residues Pro-536–Pro-553 are compositionally biased toward pro residues.

The protein belongs to the copine family. The cofactor is Ca(2+).

Functionally, probable calcium-dependent phospholipid-binding protein that may play a role in calcium-mediated intracellular processes. Plays a role in dendrite formation by melanocytes. The polypeptide is Copine-9 (Mus musculus (Mouse)).